A 118-amino-acid polypeptide reads, in one-letter code: Ribosome-binding factor A (118 aa).

This sequence belongs to the RbfA family. In terms of assembly, monomer. Binds 30S ribosomal subunits, but not 50S ribosomal subunits or 70S ribosomes.

It is found in the cytoplasm. Functionally, one of several proteins that assist in the late maturation steps of the functional core of the 30S ribosomal subunit. Associates with free 30S ribosomal subunits (but not with 30S subunits that are part of 70S ribosomes or polysomes). Required for efficient processing of 16S rRNA. May interact with the 5'-terminal helix region of 16S rRNA. In Bacillus cereus (strain AH187), this protein is Ribosome-binding factor A.